An 831-amino-acid chain; its full sequence is MPLEMEPKMSKLAFGCQRSSTSDDDSGCALEEYAWVPPGLRPEQIQLYFACLPEEKVPYVNSPGEKHRIKQLLYQLPPHDNEVRYCQSLSEEEKKELQVFSAQRKKEALGRGTIKLLSRAVMHAVCEQCGLKINGGEVAVFASRAGPGVCWHPSCFVCFTCNELLVDLIYFYQDGKIHCGRHHAELLKPRCSACDEIIFADECTEAEGRHWHMKHFCCLECETVLGGQRYIMKDGRPFCCGCFESLYAEYCETCGEHIGVDHAQMTYDGQHWHATEACFSCAQCKASLLGCPFLPKQGQIYCSKTCSLGEDVHASDSSDSAFQSARSRDSRRSVRMGKSSRSADQCRQSLLLSPALNYKFPGLSGNADDTLSRKLDDLSLSRQGTSFASEEFWKGRVEQETPEDPEEWADHEDYMTQLLLKFGDKSLFQPQPNEMDIRASEHWISDNMVKSKTELKQNNQSLASKKYQSDMYWAQSQDGLGDSAYGSHPGPASSRRLQELELDHGASGYNHDETQWYEDSLECLSDLKPEQSVRDSMDSLALSNITGASVDGENKPRPSLYSLQNFEEMETEDCEKMSNMGTLNSSMLHRSAESLKSLSSELCPEKILPEEKPVHLPVLRRSKSQSRPQQVKFSDDVIDNGNYDIEIRQPPMSERTRRRVYNFEERGSRSHHHRRRRSRKSRSDNALNLVTERKYSPKDRLRLYTPDNYEKFIQNKSAREIQAYIQNADLYGQYAHATSDYGLQNPGMNRFLGLYGEDDDSWCSSSSSSSDSEEEGYFLGQPIPQPRPQRFAYYTDDLSSPPSALPTPQFGQRTTKSKKKKGHKGKNCIIS.

Residues 14-122 enclose the PET domain; sequence FGCQRSSTSD…TIKLLSRAVM (109 aa). 3 consecutive LIM zinc-binding domains span residues 124–189, 189–249, and 249–313; these read AVCE…LLKP, PRCS…LYAE, and EYCE…EDVH. A disordered region spans residues 313 to 342; it reads HASDSSDSAFQSARSRDSRRSVRMGKSSRS. 3 positions are modified to phosphoserine: Ser-315, Ser-591, and Ser-594. Disordered stretches follow at residues 663–688 and 763–831; these read FEER…NALN and CSSS…CIIS. The segment covering 669 to 680 has biased composition (basic residues); that stretch reads RSHHHRRRRSRK. Ser-683 carries the post-translational modification Phosphoserine. The segment covering 815 to 831 has biased composition (basic residues); the sequence is TKSKKKKGHKGKNCIIS. Cys-828 is subject to Cysteine methyl ester. Cys-828 carries S-farnesyl cysteine lipidation. The propeptide at 829–831 is removed in mature form; sequence IIS.

This sequence belongs to the prickle / espinas / testin family. As to quaternary structure, interacts with REST. Expressed at highest levels in placenta and at lower levels in lung, liver, kidney and pancreas. Expressed in thalamus, hippocampus, cerebral cortex, and cerebellum (in neurons rather than glia).

The protein resides in the nucleus membrane. It localises to the cytoplasm. It is found in the cytosol. Involved in the planar cell polarity pathway that controls convergent extension during gastrulation and neural tube closure. Convergent extension is a complex morphogenetic process during which cells elongate, move mediolaterally, and intercalate between neighboring cells, leading to convergence toward the mediolateral axis and extension along the anteroposterior axis. Necessary for nuclear localization of REST. May serve as nuclear receptor. This Homo sapiens (Human) protein is Prickle-like protein 1 (PRICKLE1).